A 68-amino-acid polypeptide reads, in one-letter code: MKFTATFLMMFIFVLMVEPGECGWGSIFKHGRHAAKHIGHAAVNHYLGEQQDLDKRAVDEDPNVIVFE.

Residues 1-22 form the signal peptide; sequence MKFTATFLMMFIFVLMVEPGEC. Positions 48–68 are excised as a propeptide; that stretch reads GEQQDLDKRAVDEDPNVIVFE.

This sequence belongs to the pleurocidin family.

It is found in the secreted. Functionally, antimicrobial peptide. This chain is Pleurocidin-like peptide WF4 (ple4), found in Pseudopleuronectes americanus (Winter flounder).